A 445-amino-acid polypeptide reads, in one-letter code: C4-dicarboxylate transport protein (445 aa).

The next 8 membrane-spanning stretches (helical) occupy residues 24–44 (VLYV…WLSP), 62–82 (LIKM…IAHI), 105–125 (FALV…GLAA), 163–183 (GDIL…MALG), 201–221 (FGVI…AMAF), 234–254 (LIGL…LVLG), 322–342 (IYMT…LSFG), and 370–390 (AGTL…VFSI).

It belongs to the dicarboxylate/amino acid:cation symporter (DAACS) (TC 2.A.23) family.

It localises to the cell inner membrane. Functionally, responsible for the transport of dicarboxylates such as succinate, fumarate, and malate from the periplasm across the membrane. This is C4-dicarboxylate transport protein from Rhodopseudomonas palustris (strain ATCC BAA-98 / CGA009).